Here is an 84-residue protein sequence, read N- to C-terminus: Small ribosomal subunit protein uS17 (84 aa).

Belongs to the universal ribosomal protein uS17 family. Part of the 30S ribosomal subunit.

Functionally, one of the primary rRNA binding proteins, it binds specifically to the 5'-end of 16S ribosomal RNA. This chain is Small ribosomal subunit protein uS17, found in Moorella thermoacetica (strain ATCC 39073 / JCM 9320).